The primary structure comprises 344 residues: Holliday junction branch migration complex subunit RuvB (344 aa).

A large ATPase domain (RuvB-L) region spans residues 1–181; it reads MERIVTPAEM…FGVLCAMEYY (181 aa). ATP-binding positions include L20, R21, G62, K65, T66, T67, 128–130, R171, Y181, and R218; that span reads EDY. A Mg(2+)-binding site is contributed by T66. The small ATPAse domain (RuvB-S) stretch occupies residues 182 to 252; the sequence is DETQLKEIVI…EARDALELLE (71 aa). Residues 255-344 form a head domain (RuvB-H) region; it reads NQGFDKVDNK…SNKGQTSFFK (90 aa). Residues R310 and R315 each coordinate DNA.

This sequence belongs to the RuvB family. As to quaternary structure, homohexamer. Forms an RuvA(8)-RuvB(12)-Holliday junction (HJ) complex. HJ DNA is sandwiched between 2 RuvA tetramers; dsDNA enters through RuvA and exits via RuvB. An RuvB hexamer assembles on each DNA strand where it exits the tetramer. Each RuvB hexamer is contacted by two RuvA subunits (via domain III) on 2 adjacent RuvB subunits; this complex drives branch migration. In the full resolvosome a probable DNA-RuvA(4)-RuvB(12)-RuvC(2) complex forms which resolves the HJ.

It is found in the cytoplasm. The enzyme catalyses ATP + H2O = ADP + phosphate + H(+). The RuvA-RuvB-RuvC complex processes Holliday junction (HJ) DNA during genetic recombination and DNA repair, while the RuvA-RuvB complex plays an important role in the rescue of blocked DNA replication forks via replication fork reversal (RFR). RuvA specifically binds to HJ cruciform DNA, conferring on it an open structure. The RuvB hexamer acts as an ATP-dependent pump, pulling dsDNA into and through the RuvAB complex. RuvB forms 2 homohexamers on either side of HJ DNA bound by 1 or 2 RuvA tetramers; 4 subunits per hexamer contact DNA at a time. Coordinated motions by a converter formed by DNA-disengaged RuvB subunits stimulates ATP hydrolysis and nucleotide exchange. Immobilization of the converter enables RuvB to convert the ATP-contained energy into a lever motion, pulling 2 nucleotides of DNA out of the RuvA tetramer per ATP hydrolyzed, thus driving DNA branch migration. The RuvB motors rotate together with the DNA substrate, which together with the progressing nucleotide cycle form the mechanistic basis for DNA recombination by continuous HJ branch migration. Branch migration allows RuvC to scan DNA until it finds its consensus sequence, where it cleaves and resolves cruciform DNA. The polypeptide is Holliday junction branch migration complex subunit RuvB (Clostridium botulinum (strain Eklund 17B / Type B)).